The sequence spans 340 residues: Phosphoribosylformylglycinamidine cyclo-ligase (340 aa).

Belongs to the AIR synthase family.

It localises to the cytoplasm. The enzyme catalyses 2-formamido-N(1)-(5-O-phospho-beta-D-ribosyl)acetamidine + ATP = 5-amino-1-(5-phospho-beta-D-ribosyl)imidazole + ADP + phosphate + H(+). The protein operates within purine metabolism; IMP biosynthesis via de novo pathway; 5-amino-1-(5-phospho-D-ribosyl)imidazole from N(2)-formyl-N(1)-(5-phospho-D-ribosyl)glycinamide: step 2/2. This is Phosphoribosylformylglycinamidine cyclo-ligase from Streptococcus pyogenes serotype M18 (strain MGAS8232).